The following is a 63-amino-acid chain: Large ribosomal subunit protein uL29 (63 aa).

The protein belongs to the universal ribosomal protein uL29 family.

This chain is Large ribosomal subunit protein uL29, found in Bordetella petrii (strain ATCC BAA-461 / DSM 12804 / CCUG 43448).